Consider the following 205-residue polypeptide: Large ribosomal subunit protein bL25 (205 aa).

A disordered region spans residues 180-205; that stretch reads HEEVAEEAEETEGEDAEEAPAAEGEE. Residues 183-205 show a composition bias toward acidic residues; the sequence is VAEEAEETEGEDAEEAPAAEGEE.

It belongs to the bacterial ribosomal protein bL25 family. CTC subfamily. As to quaternary structure, part of the 50S ribosomal subunit; part of the 5S rRNA/L5/L18/L25 subcomplex. Contacts the 5S rRNA. Binds to the 5S rRNA independently of L5 and L18.

This is one of the proteins that binds to the 5S RNA in the ribosome where it forms part of the central protuberance. The polypeptide is Large ribosomal subunit protein bL25 (Corynebacterium diphtheriae (strain ATCC 700971 / NCTC 13129 / Biotype gravis)).